We begin with the raw amino-acid sequence, 917 residues long: Lipoxygenase 6, chloroplastic (917 aa).

The transit peptide at 1 to 40 (MFVASPVKTNFNGVSLVKSPAFSALSCRKQHRVPISRQVR) directs the protein to the chloroplast. Residues 46-57 (EEKAVDQEDGKK) are compositionally biased toward basic and acidic residues. The interval 46 to 66 (EEKAVDQEDGKKSTNKPLINS) is disordered. In terms of domain architecture, PLAT spans 98–216 (ERFEHQLELF…DNPQARIIFR (119 aa)). The region spanning 219 to 917 (PCLPSETPDG…GRGIPNSISI (699 aa)) is the Lipoxygenase domain. Residues H575, H580, H767, and N771 each contribute to the Fe cation site. The segment at 880 to 904 (KDKKLKNRTGAGMPPYELLLPTSPH) is disordered. Residue I917 coordinates Fe cation.

It belongs to the lipoxygenase family. Fe cation is required as a cofactor.

It localises to the plastid. Its subcellular location is the chloroplast. The enzyme catalyses (9Z,12Z)-octadecadienoate + O2 = (13S)-hydroperoxy-(9Z,11E)-octadecadienoate. It catalyses the reaction (9Z,12Z,15Z)-octadecatrienoate + O2 = (13S)-hydroperoxy-(9Z,11E,15Z)-octadecatrienoate. Its pathway is lipid metabolism; oxylipin biosynthesis. In terms of biological role, plant lipoxygenases may be involved in a number of diverse aspects of plant physiology including growth and development, pest resistance, and senescence or responses to wounding. Catalyzes the hydroperoxidation of lipids containing a cis,cis-1,4-pentadiene structure. 13S-lipoxygenase that can use linolenic acid as substrates. This chain is Lipoxygenase 6, chloroplastic, found in Arabidopsis thaliana (Mouse-ear cress).